The primary structure comprises 471 residues: Siroheme synthase (471 aa).

The segment at 1–203 (MEYLPLFADL…GRLEQAEQAL (203 aa)) is precorrin-2 dehydrogenase /sirohydrochlorin ferrochelatase. Residues 22–23 (EV) and 43–44 (RA) each bind NAD(+). Residue Ser128 is modified to Phosphoserine. The uroporphyrinogen-III C-methyltransferase stretch occupies residues 215 to 471 (GEVALVGAGP…QKRASVVNLA (257 aa)). Pro224 provides a ligand contact to S-adenosyl-L-methionine. The active-site Proton acceptor is the Asp247. Residue Lys269 is the Proton donor of the active site. S-adenosyl-L-methionine is bound by residues 300–302 (GGD), Ile305, 330–331 (TA), Met382, and Gly411.

This sequence in the N-terminal section; belongs to the precorrin-2 dehydrogenase / sirohydrochlorin ferrochelatase family. In the C-terminal section; belongs to the precorrin methyltransferase family.

It catalyses the reaction uroporphyrinogen III + 2 S-adenosyl-L-methionine = precorrin-2 + 2 S-adenosyl-L-homocysteine + H(+). The catalysed reaction is precorrin-2 + NAD(+) = sirohydrochlorin + NADH + 2 H(+). It carries out the reaction siroheme + 2 H(+) = sirohydrochlorin + Fe(2+). It participates in cofactor biosynthesis; adenosylcobalamin biosynthesis; precorrin-2 from uroporphyrinogen III: step 1/1. Its pathway is cofactor biosynthesis; adenosylcobalamin biosynthesis; sirohydrochlorin from precorrin-2: step 1/1. It functions in the pathway porphyrin-containing compound metabolism; siroheme biosynthesis; precorrin-2 from uroporphyrinogen III: step 1/1. The protein operates within porphyrin-containing compound metabolism; siroheme biosynthesis; siroheme from sirohydrochlorin: step 1/1. It participates in porphyrin-containing compound metabolism; siroheme biosynthesis; sirohydrochlorin from precorrin-2: step 1/1. In terms of biological role, multifunctional enzyme that catalyzes the SAM-dependent methylations of uroporphyrinogen III at position C-2 and C-7 to form precorrin-2 via precorrin-1. Then it catalyzes the NAD-dependent ring dehydrogenation of precorrin-2 to yield sirohydrochlorin. Finally, it catalyzes the ferrochelation of sirohydrochlorin to yield siroheme. In Sodalis glossinidius (strain morsitans), this protein is Siroheme synthase.